We begin with the raw amino-acid sequence, 751 residues long: Photosystem I P700 chlorophyll a apoprotein A1 (751 aa).

Helical transmembrane passes span 73–96 (VFSA…FHGA), 159–182 (LYIT…FHYH), 198–222 (LNHH…HVSL), 294–312 (VAHH…GHMY), 349–372 (WHAQ…QHMY), 388–414 (LSLF…IFMV), 436–458 (AIIS…LYIH), and 533–551 (FLVH…LILL). Positions 575 and 584 each coordinate [4Fe-4S] cluster. The next 2 membrane-spanning stretches (helical) occupy residues 591–612 (HVFL…HFSW) and 665–687 (LSAY…MFLF). A chlorophyll a'-binding site is contributed by His676. Chlorophyll a is bound by residues Met684 and Tyr692. A phylloquinone-binding site is contributed by Trp693. A helical membrane pass occupies residues 725-745 (AVGVAHYLLGGIATTWSFFLA).

Belongs to the PsaA/PsaB family. As to quaternary structure, the PsaA/B heterodimer binds the P700 chlorophyll special pair and subsequent electron acceptors. PSI consists of a core antenna complex that captures photons, and an electron transfer chain that converts photonic excitation into a charge separation. The eukaryotic PSI reaction center is composed of at least 11 subunits. P700 is a chlorophyll a/chlorophyll a' dimer, A0 is one or more chlorophyll a, A1 is one or both phylloquinones and FX is a shared 4Fe-4S iron-sulfur center. is required as a cofactor.

Its subcellular location is the plastid. It is found in the chloroplast thylakoid membrane. It carries out the reaction reduced [plastocyanin] + hnu + oxidized [2Fe-2S]-[ferredoxin] = oxidized [plastocyanin] + reduced [2Fe-2S]-[ferredoxin]. PsaA and PsaB bind P700, the primary electron donor of photosystem I (PSI), as well as the electron acceptors A0, A1 and FX. PSI is a plastocyanin/cytochrome c6-ferredoxin oxidoreductase, converting photonic excitation into a charge separation, which transfers an electron from the donor P700 chlorophyll pair to the spectroscopically characterized acceptors A0, A1, FX, FA and FB in turn. Oxidized P700 is reduced on the lumenal side of the thylakoid membrane by plastocyanin or cytochrome c6. This Euglena gracilis protein is Photosystem I P700 chlorophyll a apoprotein A1.